The chain runs to 338 residues: Anthocyanidin reductase ((2S)-flavan-3-ol-forming) (338 aa).

NADP(+) is bound by residues 18–21 (TGFV), Lys-48, 87–90 (VATP), and Tyr-168.

This sequence belongs to the NAD(P)-dependent epimerase/dehydratase family. Dihydroflavonol-4-reductase subfamily. As to expression, expressed in leaves and grape berries.

The enzyme catalyses a (2S,3R)-flavan-3-ol + 2 NADP(+) = an anthocyanidin with a 3-hydroxy group + 2 NADPH + 2 H(+). It carries out the reaction a (2S,3S)-flavan-3-ol + 2 NADP(+) = an anthocyanidin with a 3-hydroxy group + 2 NADPH + 2 H(+). It functions in the pathway secondary metabolite biosynthesis; flavonoid biosynthesis. In terms of biological role, produces the terminal flavan-3-ol monomers required for the formation of proanthocyanidins or condensed tannins in leaves and flowers, as well as in the skin and seeds of developing berries. Behaves as a reductase and as a C-3 epimerase. Catalyzes the double reduction of anthocyanidins, producing a mixture of (2S,3S)- and (2S,3R)-flavan-3-ols. The enzyme catalyzes sequential hydride transfers to C-2 and C-4, respectively and epimerization at C-3 is achieved by tautomerization that occurs between the two hydride transfers. Converts cyanidin, pelargonidin and delphinidin into catechin and epicatechin, afzelechin and epiafzelechin, and gallocatechin and epigallocatechin respectively. The polypeptide is Anthocyanidin reductase ((2S)-flavan-3-ol-forming) (Vitis vinifera (Grape)).